A 200-amino-acid chain; its full sequence is ATP-dependent Clp protease proteolytic subunit 3 (200 aa).

Catalysis depends on serine 101, which acts as the Nucleophile. Residue histidine 126 is part of the active site.

The protein belongs to the peptidase S14 family. In terms of assembly, fourteen ClpP subunits assemble into 2 heptameric rings which stack back to back to give a disk-like structure with a central cavity, resembling the structure of eukaryotic proteasomes.

Its subcellular location is the cytoplasm. It carries out the reaction Hydrolysis of proteins to small peptides in the presence of ATP and magnesium. alpha-casein is the usual test substrate. In the absence of ATP, only oligopeptides shorter than five residues are hydrolyzed (such as succinyl-Leu-Tyr-|-NHMec, and Leu-Tyr-Leu-|-Tyr-Trp, in which cleavage of the -Tyr-|-Leu- and -Tyr-|-Trp bonds also occurs).. In terms of biological role, cleaves peptides in various proteins in a process that requires ATP hydrolysis. Has a chymotrypsin-like activity. Plays a major role in the degradation of misfolded proteins. The sequence is that of ATP-dependent Clp protease proteolytic subunit 3 from Synechococcus sp. (strain CC9902).